We begin with the raw amino-acid sequence, 237 residues long: Lysophospholipase-like protein 1 (237 aa).

At alanine 2 the chain carries N-acetylalanine. Residues serine 124, aspartate 179, and histidine 211 each act as charge relay system in the active site.

Belongs to the AB hydrolase superfamily. AB hydrolase 2 family.

Its subcellular location is the cytoplasm. The protein resides in the cytosol. The catalysed reaction is S-hexadecanoyl-L-cysteinyl-[protein] + H2O = L-cysteinyl-[protein] + hexadecanoate + H(+). Palmitoyl thioesterase that catalyzes depalmitoylation of CGAS and KCNMA1. Acts as a regulator of innate immunity by mediating depalmitoylation of CGAS, thereby preventing CGAS homodimerization and cyclic GMP-AMP synthase activity. Does not exhibit phospholipase nor triacylglycerol lipase activity, able to hydrolyze only short chain substrates due to its shallow active site. The protein is Lysophospholipase-like protein 1 of Pongo abelii (Sumatran orangutan).